The sequence spans 962 residues: Cohesin subunit psc3 (962 aa).

A disordered region spans residues 1 to 72 (MSESVTTGSD…GVNVKRSRRN (72 aa)). Residues 21–30 (VMLSQSFDPM) are compositionally biased toward polar residues. Over residues 51–71 (SSKKRHPRPNSKGVNVKRSRR) the composition is skewed to basic residues. A coiled-coil region spans residues 236 to 275 (LCEKSKELLNEHAIATKQLEKEEKRSRVNRNRINELNNSL). The 86-residue stretch at 297-382 (FVHRYRDVEP…SRFKERILEM (86 aa)) folds into the SCD domain.

This sequence belongs to the SCC3 family. Cohesin complexes are composed of the psm1/smc1 and psm3/smc3 heterodimer attached via their hinge domain, rad21/scc1 which link them, and psc3/scc3, which interacts with rad21. Interacts with swi6. The interaction with swi6 may contribute to recruit cohesin complex to heterochromatin.

Its subcellular location is the nucleus. The protein resides in the chromosome. It is found in the centromere. In terms of biological role, component of cohesin complex, a complex required for the cohesion of sister chromatids after DNA replication. The cohesin complex apparently forms a large proteinaceous ring within which sister chromatids can be trapped. At anaphase, the rad21 subunit of the cohesin complex is cleaved and dissociates from chromatin, allowing sister chromatids to segregate. The cohesin complex may also play a role in spindle pole assembly during mitosis. The chain is Cohesin subunit psc3 (psc3) from Schizosaccharomyces pombe (strain 972 / ATCC 24843) (Fission yeast).